The primary structure comprises 590 residues: Phosphomethylpyrimidine synthase (590 aa).

Substrate contacts are provided by residues N197, M226, Y255, H291, 311 to 313 (SRG), 352 to 355 (DGLR), and E391. H395 is a binding site for Zn(2+). Y418 lines the substrate pocket. Zn(2+) is bound at residue H459. The [4Fe-4S] cluster site is built by C539, C542, and C547.

Belongs to the ThiC family. The cofactor is [4Fe-4S] cluster.

It carries out the reaction 5-amino-1-(5-phospho-beta-D-ribosyl)imidazole + S-adenosyl-L-methionine = 4-amino-2-methyl-5-(phosphooxymethyl)pyrimidine + CO + 5'-deoxyadenosine + formate + L-methionine + 3 H(+). Its pathway is cofactor biosynthesis; thiamine diphosphate biosynthesis. Functionally, catalyzes the synthesis of the hydroxymethylpyrimidine phosphate (HMP-P) moiety of thiamine from aminoimidazole ribotide (AIR) in a radical S-adenosyl-L-methionine (SAM)-dependent reaction. This is Phosphomethylpyrimidine synthase from Bacillus velezensis (strain DSM 23117 / BGSC 10A6 / LMG 26770 / FZB42) (Bacillus amyloliquefaciens subsp. plantarum).